Here is a 300-residue protein sequence, read N- to C-terminus: UDP-N-acetylenolpyruvoylglucosamine reductase (300 aa).

The FAD-binding PCMH-type domain occupies 28-190 (KIGGRVKYLV…TRAMMSFKKE (163 aa)). Arg169 is an active-site residue. The active-site Proton donor is Ser219. Glu290 is a catalytic residue.

This sequence belongs to the MurB family. FAD is required as a cofactor.

The protein localises to the cytoplasm. The catalysed reaction is UDP-N-acetyl-alpha-D-muramate + NADP(+) = UDP-N-acetyl-3-O-(1-carboxyvinyl)-alpha-D-glucosamine + NADPH + H(+). Its pathway is cell wall biogenesis; peptidoglycan biosynthesis. Functionally, cell wall formation. This chain is UDP-N-acetylenolpyruvoylglucosamine reductase, found in Thermotoga sp. (strain RQ2).